We begin with the raw amino-acid sequence, 347 residues long: MPTPLTLADFDYHLPPELIAQSPAAERGGSRLLHLDAASRLHDRRFPDLAGLLRPHDLLVFNDTRVIKARLTGQKATGGKVEVLVERITAPDRALAHVRASKSPGPGMRLRLAEAFEAEVLGREGELFDLRFPAPVLDLLDAHGATPLPPYITHAADATDERRYQTVYAREPGAVAAPTAGLHFDQPMLEQLAAQGVQRAFVTLHVGAGTFQPVRVQNLAEHIMHAEWYTVPEATVAAIARARAHGGRIVAVGTTSVRALESAAAQAQDGPLAAAQGDTRLFITPGYRYRAVDALLTNFHLPQSTLLMLVSALAGVEPIRRAYAHAVAERYRFFSYGDAMFIETPAP.

It belongs to the QueA family. Monomer.

It localises to the cytoplasm. It carries out the reaction 7-aminomethyl-7-carbaguanosine(34) in tRNA + S-adenosyl-L-methionine = epoxyqueuosine(34) in tRNA + adenine + L-methionine + 2 H(+). It participates in tRNA modification; tRNA-queuosine biosynthesis. Functionally, transfers and isomerizes the ribose moiety from AdoMet to the 7-aminomethyl group of 7-deazaguanine (preQ1-tRNA) to give epoxyqueuosine (oQ-tRNA). This chain is S-adenosylmethionine:tRNA ribosyltransferase-isomerase, found in Bordetella pertussis (strain Tohama I / ATCC BAA-589 / NCTC 13251).